We begin with the raw amino-acid sequence, 117 residues long: Gamma-aminobutyric acid receptor-associated protein-like 3 (117 aa).

Residues 1-22 (MKFQYKEVHPFEYRKKEGEKIR) form an interaction with beta-tubulin region. The interval 36–68 (APKARVPDLDRRKYLVPSDLTDGQFYLLIRKRI) is interaction with GABRG2. Gly116 is lipidated: Phosphatidylethanolamine amidated glycine. Lys117 is a propeptide (removed in mature form).

The protein belongs to the ATG8 family. In terms of assembly, interacts with GABRG2 and beta-tubulin. In terms of processing, the precursor molecule is cleaved by ATG4B to form the cytosolic form, GABARAPL3-I. This is activated by APG7L/ATG7, transferred to ATG3 and conjugated to phospholipid to form the membrane-bound form, GABARAPL3-II. ATG4B also mediates the delipidation required for GABARAPL1 recycling when autophagosomes fuse with lysosomes. As to expression, ubiquitous. Expressed at very high levels in the brain, heart, peripheral blood leukocytes, liver, kidney, placenta and skeletal muscle. Expressed at very low levels in thymus and small intestine.

Its subcellular location is the cytoplasm. It is found in the cytoskeleton. The protein resides in the cytoplasmic vesicle. The protein localises to the autophagosome membrane. In terms of biological role, ubiquitin-like modifier involved in autophagosome formation. Whereas LC3s are involved in elongation of the phagophore membrane, the GABARAP/GATE-16 subfamily is essential for a later stage in autophagosome maturation. The chain is Gamma-aminobutyric acid receptor-associated protein-like 3 (GABARAPL3) from Homo sapiens (Human).